The chain runs to 592 residues: A-type ATP synthase subunit A (592 aa).

233-240 (GPFGSGKT) lines the ATP pocket.

The protein belongs to the ATPase alpha/beta chains family. In terms of assembly, has multiple subunits with at least A(3), B(3), C, D, E, F, H, I and proteolipid K(x).

The protein resides in the cell membrane. It carries out the reaction ATP + H2O + 4 H(+)(in) = ADP + phosphate + 5 H(+)(out). Functionally, component of the A-type ATP synthase that produces ATP from ADP in the presence of a proton gradient across the membrane. The A chain is the catalytic subunit. This is A-type ATP synthase subunit A from Saccharolobus islandicus (strain Y.N.15.51 / Yellowstone #2) (Sulfolobus islandicus).